The primary structure comprises 157 residues: Small ribosomal subunit protein uS7 (157 aa).

This sequence belongs to the universal ribosomal protein uS7 family. Part of the 30S ribosomal subunit. Contacts proteins S9 and S11.

Its function is as follows. One of the primary rRNA binding proteins, it binds directly to 16S rRNA where it nucleates assembly of the head domain of the 30S subunit. Is located at the subunit interface close to the decoding center, probably blocks exit of the E-site tRNA. The protein is Small ribosomal subunit protein uS7 of Bdellovibrio bacteriovorus (strain ATCC 15356 / DSM 50701 / NCIMB 9529 / HD100).